The chain runs to 111 residues: Ribosome-binding factor A (111 aa).

This sequence belongs to the RbfA family. As to quaternary structure, monomer. Binds 30S ribosomal subunits, but not 50S ribosomal subunits or 70S ribosomes.

It localises to the cytoplasm. Its function is as follows. One of several proteins that assist in the late maturation steps of the functional core of the 30S ribosomal subunit. Associates with free 30S ribosomal subunits (but not with 30S subunits that are part of 70S ribosomes or polysomes). Required for efficient processing of 16S rRNA. May interact with the 5'-terminal helix region of 16S rRNA. This chain is Ribosome-binding factor A, found in Helicobacter pylori (strain ATCC 700392 / 26695) (Campylobacter pylori).